The sequence spans 218 residues: Claudin-5 (218 aa).

At 1-7 (MGSAALE) the chain is on the cytoplasmic side. The helical transmembrane segment at 8–28 (ILGLVLCLVGWVGLILACGLP) threads the bilayer. Over 29 to 81 (MWQVTAFLDHNIVTAQTTWKGLWMSCVVQSTGHMQCKVYESVLALSAEVQAAR) the chain is Extracellular. The helical transmembrane segment at 82–102 (ALTVGAVLLALVALFVTLTGA) threads the bilayer. Residues 103-123 (QCTTCVAPGPVKARVALTGGA) lie on the Cytoplasmic side of the membrane. A helical membrane pass occupies residues 124–144 (LYAVCGLLALVPLCWFANIVV). Residues 145 to 160 (REFYDPTVPVSQKYEL) lie on the Extracellular side of the membrane. The helical transmembrane segment at 161–181 (GAALYIGWAASALLMCGGGLV) threads the bilayer. Residues 182 to 218 (CCGAWVCTGRPEFSFPVKYSAPRRPTANGDYDKKNYV) are Cytoplasmic-facing. Residues 217–218 (YV) form an interactions with TJP1, TJP2 and TJP3 region.

It belongs to the claudin family. As to quaternary structure, interacts with MPDZ. Directly interacts with TJP1/ZO-1, TJP2/ZO-2 and TJP3/ZO-3. Widely expressed with highest levels in the lung.

The protein resides in the cell junction. It localises to the tight junction. The protein localises to the cell membrane. Its function is as follows. Plays a major role in tight junction-specific obliteration of the intercellular space, through calcium-independent cell-adhesion activity. The polypeptide is Claudin-5 (Cldn5) (Mus musculus (Mouse)).